The following is a 152-amino-acid chain: ARL14 effector protein-like (152 aa).

The span at 1–16 shows a compositional bias: polar residues; it reads MTEPSQKNNSTQQELT. The segment at 1–27 is disordered; that stretch reads MTEPSQKNNSTQQELTNHLFPEKSSQI.

The sequence is that of ARL14 effector protein-like (Arl14epl) from Mus musculus (Mouse).